A 103-amino-acid polypeptide reads, in one-letter code: Large ribosomal subunit protein bL21 (103 aa).

Belongs to the bacterial ribosomal protein bL21 family. Part of the 50S ribosomal subunit. Contacts protein L20.

This protein binds to 23S rRNA in the presence of protein L20. The sequence is that of Large ribosomal subunit protein bL21 from Cupriavidus pinatubonensis (strain JMP 134 / LMG 1197) (Cupriavidus necator (strain JMP 134)).